We begin with the raw amino-acid sequence, 31 residues long: Protamine-1B (31 aa).

The disordered stretch occupies residues Met-1–Arg-31.

As to expression, testis.

Its subcellular location is the nucleus. It is found in the chromosome. In terms of biological role, protamines substitute for histones in the chromatin of sperm during the haploid phase of spermatogenesis. They compact sperm DNA into a highly condensed, stable and inactive complex. The sequence is that of Protamine-1B from Oncorhynchus mykiss (Rainbow trout).